The sequence spans 297 residues: MHTPVLLNEMLDILNPQDGKVYVDATFGAGGYTRAILKSANCQVYAIDQDECTNVFYEKLVNDFPGKVHFCVSKFSKIKQILHGAQLKKVDGIVFDIGVSSMQLEDASRGFSFSKDGPLDMRMSTSISNVDASVFVNTAFEEEIANVIYQYGGEKYSRKIAKAIAESRKKKPIKTTGELASIVRSVISRSKNHSIDPATRTFQAIRIWVNKELEELEQGIIDSADLLNPGGKIIVVSFHSLEDRIVKVMFKSLCSGSSVISPIGFQLINKKVIRPSFEEILNNPRSRSAKLRAILKI.

S-adenosyl-L-methionine-binding positions include 30 to 32 (GGY), aspartate 48, phenylalanine 75, aspartate 96, and glutamine 103.

Belongs to the methyltransferase superfamily. RsmH family.

It localises to the cytoplasm. The enzyme catalyses cytidine(1402) in 16S rRNA + S-adenosyl-L-methionine = N(4)-methylcytidine(1402) in 16S rRNA + S-adenosyl-L-homocysteine + H(+). Functionally, specifically methylates the N4 position of cytidine in position 1402 (C1402) of 16S rRNA. The sequence is that of Ribosomal RNA small subunit methyltransferase H from Ehrlichia chaffeensis (strain ATCC CRL-10679 / Arkansas).